The primary structure comprises 1405 residues: DNA-directed RNA polymerase subunit beta' (1405 aa).

Residues Cys71, Cys73, Cys86, and Cys89 each coordinate Zn(2+). The Mg(2+) site is built by Asp462, Asp464, and Asp466. Residues Cys820, Cys893, Cys900, and Cys903 each contribute to the Zn(2+) site.

The protein belongs to the RNA polymerase beta' chain family. The RNAP catalytic core consists of 2 alpha, 1 beta, 1 beta' and 1 omega subunit. When a sigma factor is associated with the core the holoenzyme is formed, which can initiate transcription. The cofactor is Mg(2+). Requires Zn(2+) as cofactor.

The catalysed reaction is RNA(n) + a ribonucleoside 5'-triphosphate = RNA(n+1) + diphosphate. In terms of biological role, DNA-dependent RNA polymerase catalyzes the transcription of DNA into RNA using the four ribonucleoside triphosphates as substrates. This is DNA-directed RNA polymerase subunit beta' from Methylorubrum extorquens (strain CM4 / NCIMB 13688) (Methylobacterium extorquens).